A 1050-amino-acid chain; its full sequence is MKPFNIFDSNSSIQGKFFLEASAGTGKTFTIEQIVLRALIEGSLTHVEHALAITFTNASTNELKVRIKDNLAQTLRELKAVLNSQPASLPTYLDINCNVKQIYMQVRNALATLDQMSLFTIHGFCNFVLEQYFPKTRLIHKNPALTHSQLVLHHITNYLKQDLWKNVLFQEQFHLLAVRYNVTSKHTSSLVDKLLASYTQPISSYFSSRVERLEQISLWHQQIYNSLLEIPKQVFLDQLTAHISGFKKQPFSILDDLHHFVDLLYTSETHSSLFSFFKIAETFNFKHRLARYKPCAAFTVLENMSWVERTLEFCNLDRIFNTLLVDLQEYLKQNYTPWLSPDESVFALEKLLSSSEAQPVVQALREQYQLVLIDEFQDTDKQQWSIFSNLFISPKFTGSLFLIGDPKQSIYEWRSADLPTYLTAKSSFSEDKQLQLVNNYRSTPKLMEAINQIFGKISPFLEIPGYLPIEYHALNPQSSETFENPPHAPIHFFFYETIKDQALWIFSEALRLQKEQKIPLGNMVVLVSDSNQAFELISYATIPVSFSKNKSIFHLTETHILTTALLEAILHPENYEKISKILFSSLFGLSLDEVTTKKEDFTIYFQSLHSYISHHGLLATFYRVMTTQGNVLFSSPRGDLIFQEMEKLCGYLDTISSYPYHQLLHLKNFSETGRWEEELAISSYSEDLETLKITTIHSSKGLEYDIVFCPGIEKSKKNKSSSELLREMYVACTRAKKQLYLPISTQPPSLQRSSALTNYVKLEGTQSSAYDLAIHLHQEHPDLFSYSLPKDHGHATTVLNLPLLETFALKVTPPKTIFSFSSTKFLLDTHKDSQSIPYSKLPISKQQLPLGEKTGILIHKILESIQFSLLQDTEYLMSTIMRFIKHTHLEGFEETILKLLSKTFFSPLTFSSQTFSLSQVLPNKIFRETSFLFLENQELWQGVIDLFFEHEGKYYIIDWKTSFLGETNSDYSKSNLSIYIKQEKLDYQGRIYVKAVRKFLNQFEIDDDVELGVIFIRGIDTQGNGFFALNSSEDIPNFNPKAIQKCQAYH.

Residues 1 to 443 (MKPFNIFDSN…LQLVNNYRST (443 aa)) enclose the UvrD-like helicase ATP-binding domain. The DNA-binding and helicase activity, interacts with RecC stretch occupies residues 1–766 (MKPFNIFDSN…TNYVKLEGTQ (766 aa)). 21 to 28 (ASAGTGKT) contributes to the ATP binding site. The region spanning 458–701 (SPFLEIPGYL…KITTIHSSKG (244 aa)) is the UvrD-like helicase C-terminal domain. The segment at 814 to 1050 (PKTIFSFSST…KAIQKCQAYH (237 aa)) is nuclease activity, interacts with RecD and RecA. Residues His859, Asp945, and Asp958 each coordinate Mg(2+). Asp958 serves as the catalytic For nuclease activity.

It belongs to the helicase family. UvrD subfamily. As to quaternary structure, heterotrimer of RecB, RecC and RecD. All subunits contribute to DNA-binding. Interacts with RecA. Mg(2+) serves as cofactor.

It carries out the reaction Exonucleolytic cleavage (in the presence of ATP) in either 5'- to 3'- or 3'- to 5'-direction to yield 5'-phosphooligonucleotides.. It catalyses the reaction Couples ATP hydrolysis with the unwinding of duplex DNA by translocating in the 3'-5' direction.. The catalysed reaction is ATP + H2O = ADP + phosphate + H(+). Functionally, a helicase/nuclease that prepares dsDNA breaks (DSB) for recombinational DNA repair. Binds to DSBs and unwinds DNA via a highly rapid and processive ATP-dependent bidirectional helicase activity. Unwinds dsDNA until it encounters a Chi (crossover hotspot instigator) sequence from the 3' direction. Cuts ssDNA a few nucleotides 3' to the Chi site. The properties and activities of the enzyme are changed at Chi. The Chi-altered holoenzyme produces a long 3'-ssDNA overhang and facilitates RecA-binding to the ssDNA for homologous DNA recombination and repair. Holoenzyme degrades any linearized DNA that is unable to undergo homologous recombination. In the holoenzyme this subunit contributes ATPase, 3'-5' helicase, exonuclease activity and loads RecA onto ssDNA. This chain is RecBCD enzyme subunit RecB, found in Chlamydia pneumoniae (Chlamydophila pneumoniae).